A 166-amino-acid polypeptide reads, in one-letter code: Probable histone deacetylase complex subunit SAP18 (166 aa).

The interval 143–166 is disordered; that stretch reads GRRFNNREQGDRFDHRQRQRSPIR. Residues 147–158 show a composition bias toward basic and acidic residues; sequence NNREQGDRFDHR.

Belongs to the SAP18 family. Interacts with SIN3 and histone deacetylase.

In terms of biological role, acts in transcription repression. Involved in the tethering of the SIN3 complex to core histone proteins. The chain is Probable histone deacetylase complex subunit SAP18 from Caenorhabditis elegans.